The chain runs to 159 residues: 17.9 kDa class II heat shock protein (159 aa).

The sHSP domain maps to 43–157 (DAKAMAATPA…PKKPRTIQVK (115 aa)).

The protein belongs to the small heat shock protein (HSP20) family.

Its subcellular location is the cytoplasm. This is 17.9 kDa class II heat shock protein (HSP17.9-D) from Glycine max (Soybean).